Consider the following 933-residue polypeptide: Isoleucine--tRNA ligase (933 aa).

Residues 57–67 carry the 'HIGH' region motif; that stretch reads PYANGNIHVGH. E554 contacts L-isoleucyl-5'-AMP. The short motif at 595-599 is the 'KMSKS' region element; it reads KMSKS. K598 is a binding site for ATP.

The protein belongs to the class-I aminoacyl-tRNA synthetase family. IleS type 1 subfamily. Monomer.

Its subcellular location is the cytoplasm. The catalysed reaction is tRNA(Ile) + L-isoleucine + ATP = L-isoleucyl-tRNA(Ile) + AMP + diphosphate. Its function is as follows. Catalyzes the attachment of isoleucine to tRNA(Ile). As IleRS can inadvertently accommodate and process structurally similar amino acids such as valine, to avoid such errors it has two additional distinct tRNA(Ile)-dependent editing activities. One activity is designated as 'pretransfer' editing and involves the hydrolysis of activated Val-AMP. The other activity is designated 'posttransfer' editing and involves deacylation of mischarged Val-tRNA(Ile). The protein is Isoleucine--tRNA ligase of Streptococcus pyogenes serotype M1.